The primary structure comprises 110 residues: Competence pilus inhibition repressor (110 aa).

Residues 7 to 61 form the HTH cro/C1-type domain; the sequence is VRFLRKRQGWTQQQLADFSHTSKSNISNLENGNQGYSPAILEYLAKAFNCSVSQI. The H-T-H motif DNA-binding region spans 18 to 37; that stretch reads QQQLADFSHTSKSNISNLEN.

Represses transcription of the PilB-specific inhibitory protein CpiA. The chain is Competence pilus inhibition repressor from Acinetobacter baylyi (strain ATCC 33305 / BD413 / ADP1).